A 785-amino-acid chain; its full sequence is Terminal nucleotidyltransferase 4A (785 aa).

A disordered region spans residues 56–184; it reads AAGRAAPAAG…QFHPGRRKRE (129 aa). A compositionally biased stretch (pro residues) spans 68–85; sequence GPAPAASSPPPAPGPAAL. Composition is skewed to low complexity over residues 86 to 98 and 106 to 145; these read PPALLTALGPAAD and SPSLSSSSSSSSSNAESGTESPGCSSSSSSSTSLGRAGSG. Residues Asp290 and Asp292 each contribute to the Mg(2+) site. Gly353, Lys378, Ser396, and Tyr397 together coordinate ATP. The PAP-associated domain occupies 421-480; that stretch reads NLGMLLVEFFELYGRNFNYLKTGIRIKEGGAYIAKEEIMKAMTSGYRPSMLCIEDPLLPG. 2 residues coordinate ATP: Asn481 and Arg485. The segment covering 593–611 has biased composition (low complexity); that stretch reads PQLLSSGSSASSVSSLSGS. 2 disordered regions span residues 593 to 625 and 731 to 785; these read PQLLSSGSSASSVSSLSGSDIDSDTPPCTTPSV and KGSH…SLSR. Residues 757 to 774 are compositionally biased toward basic residues; sequence RGHHQYNRTGWRRKKHAH.

Belongs to the DNA polymerase type-B-like family. Component of a nuclear TRAMP-like complex, an ATP-dependent exosome regulatory complex consisting of a helicase (MTREX), an oligadenylate polymerase (TENT4B or TENT4A), and a substrate specific RNA-binding factor (ZCCHC7 or ZCCHC8). Several TRAMP-like complexes exist with specific compositions and are associated with nuclear, or nucleolar RNA exosomes. The cofactor is Mg(2+). Requires Mn(2+) as cofactor.

The protein resides in the cytoplasm. It is found in the nucleus. The protein localises to the nucleoplasm. The enzyme catalyses RNA(n) + ATP = RNA(n)-3'-adenine ribonucleotide + diphosphate. Its function is as follows. Terminal nucleotidyltransferase that catalyzes preferentially the transfer of ATP and GTP on RNA 3' poly(A) tail creating a heterogeneous 3' poly(A) tail leading to mRNAs stabilization by protecting mRNAs from active deadenylation. Also functions as a catalytic subunit of a TRAMP-like complex which has a poly(A) RNA polymerase activity and is involved in a post-transcriptional quality control mechanism. Polyadenylation with short oligo(A) tails is required for the degradative activity of the exosome on several of its nuclear RNA substrates. Has no terminal uridylyltransferase activity, and does not play a role in replication-dependent histone mRNA degradation via uridylation. In Mus musculus (Mouse), this protein is Terminal nucleotidyltransferase 4A.